We begin with the raw amino-acid sequence, 360 residues long: Protein Wnt-2 (360 aa).

The N-terminal stretch at 1-25 is a signal peptide; it reads MNAPLCGIWLWLPLLLTWLTPEVSS. Intrachain disulfides connect cysteine 76/cysteine 87, cysteine 127/cysteine 135, cysteine 137/cysteine 157, cysteine 206/cysteine 220, cysteine 208/cysteine 215, cysteine 278/cysteine 309, cysteine 294/cysteine 304, cysteine 308/cysteine 348, cysteine 324/cysteine 339, cysteine 326/cysteine 336, and cysteine 331/cysteine 332. A lipid anchor (O-palmitoleoyl serine; by PORCN) is attached at serine 212. The N-linked (GlcNAc...) asparagine glycan is linked to asparagine 295.

Belongs to the Wnt family. Post-translationally, palmitoleoylation is required for efficient binding to frizzled receptors. Depalmitoleoylation leads to Wnt signaling pathway inhibition.

The protein localises to the secreted. It is found in the extracellular space. The protein resides in the extracellular matrix. Its function is as follows. Ligand for members of the frizzled family of seven transmembrane receptors. Functions in the canonical Wnt signaling pathway that results in activation of transcription factors of the TCF/LEF family. Functions as a upstream regulator of FGF10 expression. Plays an important role in embryonic lung development. May contribute to embryonic brain development by regulating the proliferation of dopaminergic precursors and neurons. This chain is Protein Wnt-2 (WNT2), found in Otolemur garnettii (Small-eared galago).